The chain runs to 324 residues: Hydroxyacylglutathione hydrolase 2, mitochondrial (324 aa).

The N-terminal 64 residues, 1-64 (MQTISKASSA…KSIRVSKFCS (64 aa)), are a transit peptide targeting the mitochondrion. Positions 124 and 126 each coordinate Zn(2+). Fe cation-binding residues include Asp-128 and His-129. His-182 and Asp-201 together coordinate Zn(2+). Asp-201 and His-239 together coordinate Fe cation.

Belongs to the metallo-beta-lactamase superfamily. Glyoxalase II family. Monomer. Fe(3+) is required as a cofactor. Fe(2+) serves as cofactor. It depends on Zn(2+) as a cofactor.

Its subcellular location is the mitochondrion. The enzyme catalyses an S-(2-hydroxyacyl)glutathione + H2O = a 2-hydroxy carboxylate + glutathione + H(+). It functions in the pathway secondary metabolite metabolism; methylglyoxal degradation; (R)-lactate from methylglyoxal: step 2/2. Thiolesterase that catalyzes the hydrolysis of S-D-lactoyl-glutathione to form glutathione and D-lactic acid. The chain is Hydroxyacylglutathione hydrolase 2, mitochondrial from Arabidopsis thaliana (Mouse-ear cress).